A 195-amino-acid chain; its full sequence is Peptidyl-tRNA hydrolase (195 aa).

Tyrosine 17 provides a ligand contact to tRNA. The Proton acceptor role is filled by histidine 22. TRNA contacts are provided by phenylalanine 68, asparagine 70, and asparagine 116.

The protein belongs to the PTH family. Monomer.

Its subcellular location is the cytoplasm. The enzyme catalyses an N-acyl-L-alpha-aminoacyl-tRNA + H2O = an N-acyl-L-amino acid + a tRNA + H(+). Functionally, hydrolyzes ribosome-free peptidyl-tRNAs (with 1 or more amino acids incorporated), which drop off the ribosome during protein synthesis, or as a result of ribosome stalling. In terms of biological role, catalyzes the release of premature peptidyl moieties from peptidyl-tRNA molecules trapped in stalled 50S ribosomal subunits, and thus maintains levels of free tRNAs and 50S ribosomes. The polypeptide is Peptidyl-tRNA hydrolase (Pectobacterium atrosepticum (strain SCRI 1043 / ATCC BAA-672) (Erwinia carotovora subsp. atroseptica)).